The primary structure comprises 277 residues: Large ribosomal subunit protein uL2 (277 aa).

The interval 223–264 is disordered; that stretch reads VAMNPVDHPHGGGEGKTAAGRHPVSPWGTPSKGSRTRRNKRT.

It belongs to the universal ribosomal protein uL2 family. Part of the 50S ribosomal subunit. Forms a bridge to the 30S subunit in the 70S ribosome.

In terms of biological role, one of the primary rRNA binding proteins. Required for association of the 30S and 50S subunits to form the 70S ribosome, for tRNA binding and peptide bond formation. It has been suggested to have peptidyltransferase activity; this is somewhat controversial. Makes several contacts with the 16S rRNA in the 70S ribosome. This chain is Large ribosomal subunit protein uL2, found in Nitrosomonas eutropha (strain DSM 101675 / C91 / Nm57).